Here is a 183-residue protein sequence, read N- to C-terminus: Extracellular superoxide dismutase [Cu-Zn] (183 aa).

The signal sequence occupies residues 1–32 (MTMLQQILLISVIIGTVHVHEVDCANEVLKAR). N63 carries N-linked (GlcNAc...) asparagine glycosylation. Cu cation is bound by residues H77, H79, and H94. The cysteines at positions 88 and 177 are disulfide-linked. Zn(2+) contacts are provided by H94, H102, H111, and D114. Cu cation is bound at residue H151.

This sequence belongs to the Cu-Zn superoxide dismutase family. The cofactor is Cu cation. Zn(2+) serves as cofactor.

It localises to the secreted. Its subcellular location is the extracellular space. The enzyme catalyses 2 superoxide + 2 H(+) = H2O2 + O2. Its function is as follows. Destroys radicals which are normally produced within the cells and which are toxic to biological systems. The polypeptide is Extracellular superoxide dismutase [Cu-Zn] (SOD) (Haemonchus contortus (Barber pole worm)).